The chain runs to 402 residues: Nicotinate phosphoribosyltransferase (402 aa).

Residue H224 is modified to Phosphohistidine; by autocatalysis.

This sequence belongs to the NAPRTase family. Transiently phosphorylated on a His residue during the reaction cycle. Phosphorylation strongly increases the affinity for substrates and increases the rate of nicotinate D-ribonucleotide production. Dephosphorylation regenerates the low-affinity form of the enzyme, leading to product release.

The catalysed reaction is nicotinate + 5-phospho-alpha-D-ribose 1-diphosphate + ATP + H2O = nicotinate beta-D-ribonucleotide + ADP + phosphate + diphosphate. The protein operates within cofactor biosynthesis; NAD(+) biosynthesis; nicotinate D-ribonucleotide from nicotinate: step 1/1. Catalyzes the synthesis of beta-nicotinate D-ribonucleotide from nicotinate and 5-phospho-D-ribose 1-phosphate at the expense of ATP. This is Nicotinate phosphoribosyltransferase from Neisseria meningitidis serogroup C (strain 053442).